A 295-amino-acid chain; its full sequence is Glycine N-methyltransferase (295 aa).

2 residues coordinate (6S)-5-methyl-5,6,7,8-tetrahydrofolate: serine 4 and tyrosine 6. Serine 10 bears the Phosphoserine mark. Positions 22, 31, 34, and 41 each coordinate S-adenosyl-L-methionine. Tyrosine 34 is modified (phosphotyrosine). An N6-succinyllysine modification is found at lysine 46. S-adenosyl-L-methionine contacts are provided by residues alanine 65, 86–88 (DAS), 117–118 (NW), 139–142 (LGNS), and arginine 178. 3 positions are modified to N6-succinyllysine: lysine 193, lysine 198, and lysine 203. Residue histidine 217 participates in (6S)-5-methyl-5,6,7,8-tetrahydrofolate binding. Tyrosine 223 contributes to the S-adenosyl-L-methionine binding site. Arginine 242 is a (6S)-5-methyl-5,6,7,8-tetrahydrofolate binding site.

The protein belongs to the class I-like SAM-binding methyltransferase superfamily. Glycine N-methyltransferase family. Homotetramer. As to expression, abundant in liver.

It localises to the cytoplasm. It carries out the reaction glycine + S-adenosyl-L-methionine = sarcosine + S-adenosyl-L-homocysteine + H(+). Its activity is regulated as follows. Inhibited by 5-methyltetrahydrofolate monoglutamate and by 5-methyltetrahydrofolate pentaglutamate, inhibition is much more effective by the pentaglutamate form than by the monoglutamate form. Two molecules of 5-methyltetrahydrofolate are bound per tetramer. The binding sites are localized between subunits. Inhibitor binding may preclude movements of the polypeptide chain that are necessary for enzyme activity. In terms of biological role, catalyzes the methylation of glycine by using S-adenosylmethionine (AdoMet) to form N-methylglycine (sarcosine) with the concomitant production of S-adenosylhomocysteine (AdoHcy), a reaction regulated by the binding of 5-methyltetrahydrofolate. Plays an important role in the regulation of methyl group metabolism by regulating the ratio between S-adenosyl-L-methionine and S-adenosyl-L-homocysteine. The protein is Glycine N-methyltransferase (GNMT) of Oryctolagus cuniculus (Rabbit).